The following is a 493-amino-acid chain: Ribulose bisphosphate carboxylase large chain (493 aa).

2 residues coordinate substrate: asparagine 132 and threonine 182. Lysine 184 serves as the catalytic Proton acceptor. Position 186 (lysine 186) interacts with substrate. Residues lysine 210, aspartate 212, and glutamate 213 each contribute to the Mg(2+) site. The residue at position 210 (lysine 210) is an N6-carboxylysine. Histidine 302 acts as the Proton acceptor in catalysis. Substrate-binding residues include arginine 303, histidine 335, and serine 387.

Belongs to the RuBisCO large chain family. Type I subfamily. In terms of assembly, heterohexadecamer of 8 large chains and 8 small chains. The cofactor is Mg(2+).

The enzyme catalyses 2 (2R)-3-phosphoglycerate + 2 H(+) = D-ribulose 1,5-bisphosphate + CO2 + H2O. The catalysed reaction is D-ribulose 1,5-bisphosphate + O2 = 2-phosphoglycolate + (2R)-3-phosphoglycerate + 2 H(+). In terms of biological role, ruBisCO catalyzes two reactions: the carboxylation of D-ribulose 1,5-bisphosphate, the primary event in carbon dioxide fixation, as well as the oxidative fragmentation of the pentose substrate. Both reactions occur simultaneously and in competition at the same active site. In Acidiphilium cryptum (strain JF-5), this protein is Ribulose bisphosphate carboxylase large chain.